The chain runs to 190 residues: Ras-related protein RabF1 (190 aa).

15-22 (GDSGVGKT) is a binding site for GTP. An Effector region motif is present at residues 37–44 (HITIGIEF). Residues 62-66 (DTAGE) and 119-122 (NKND) contribute to the GTP site. A Cysteine methyl ester modification is found at Cys187. Cys187 carries S-geranylgeranyl cysteine lipidation. The propeptide at 188–190 (IIN) is removed in mature form.

Belongs to the small GTPase superfamily. Rab family.

The protein resides in the cell membrane. The polypeptide is Ras-related protein RabF1 (rabF1-1) (Dictyostelium discoideum (Social amoeba)).